The primary structure comprises 305 residues: Foldase protein PrsA (305 aa).

The N-terminal stretch at 1–19 (MKKWFIALAGLLLTVTLAG) is a signal peptide. The N-palmitoyl cysteine moiety is linked to residue C20. The S-diacylglycerol cysteine moiety is linked to residue C20. In terms of domain architecture, PpiC spans 136–235 (EPEVSVAHIL…YGYHVILMLK (100 aa)).

Belongs to the PrsA family.

It localises to the cell membrane. The enzyme catalyses [protein]-peptidylproline (omega=180) = [protein]-peptidylproline (omega=0). Its function is as follows. Plays a major role in protein secretion by helping the post-translocational extracellular folding of several secreted proteins. The chain is Foldase protein PrsA from Levilactobacillus brevis (strain ATCC 367 / BCRC 12310 / CIP 105137 / JCM 1170 / LMG 11437 / NCIMB 947 / NCTC 947) (Lactobacillus brevis).